We begin with the raw amino-acid sequence, 531 residues long: Probable mitochondrial-processing peptidase subunit beta, mitochondrial (531 aa).

The N-terminal 78 residues, 1–78 (MAMKNLLSLA…ENPDKRFLKY (78 aa)), are a transit peptide targeting the mitochondrion. The interval 30–50 (SAIDSVPASASPTALSPPPPH) is disordered. Residue H141 participates in Zn(2+) binding. The Proton acceptor role is filled by E144. H145 contacts Zn(2+). E214 is an active-site residue. E221 contacts Zn(2+).

This sequence belongs to the peptidase M16 family. In terms of assembly, heterodimer of an alpha subunit and a beta subunit subunits, forming the mitochondrial processing protease (MPP) in which the alpha subunit is involved in substrate recognition and binding and the beta subunit is the catalytic subunit. Component of the ubiquinol-cytochrome c oxidoreductase (cytochrome b-c1 complex, complex III, CIII), a multisubunit enzyme composed of 10 subunits. The complex is composed of 3 respiratory subunits cytochrome b (MT-CYB), cytochrome c1 (CYC1-1 or CYC1-2) and Rieske protein (UCR1-1 or UCR1-2), 2 core protein subunits MPPalpha1 (or MPPalpha2) and MPPB, and 5 low-molecular weight protein subunits QCR7-1 (or QCR7-2), UCRQ-1 (or UCRQ-2), QCR9, UCRY and probably QCR6-1 (or QCR6-2). The complex exists as an obligatory dimer and forms supercomplexes (SCs) in the inner mitochondrial membrane with NADH-ubiquinone oxidoreductase (complex I, CI), resulting in different assemblies (supercomplexes SCI(1)III(2) and SCI(2)III(4)). Zn(2+) is required as a cofactor.

It is found in the mitochondrion. The protein localises to the mitochondrion inner membrane. It carries out the reaction Release of N-terminal transit peptides from precursor proteins imported into the mitochondrion, typically with Arg in position P2.. With respect to regulation, binding to the alpha subunit is required for catalytic activity. In terms of biological role, catalytic subunit of the essential mitochondrial processing protease (MPP), which cleaves the mitochondrial sequence off newly imported precursors proteins. Preferentially, cleaves after an arginine at position P2. Its function is as follows. Component of the ubiquinol-cytochrome c oxidoreductase, a multisubunit transmembrane complex that is part of the mitochondrial electron transport chain which drives oxidative phosphorylation. The respiratory chain contains 3 multisubunit complexes succinate dehydrogenase (complex II, CII), ubiquinol-cytochrome c oxidoreductase (cytochrome b-c1 complex, complex III, CIII) and cytochrome c oxidase (complex IV, CIV), that cooperate to transfer electrons derived from NADH and succinate to molecular oxygen, creating an electrochemical gradient over the inner membrane that drives transmembrane transport and the ATP synthase. The cytochrome b-c1 complex catalyzes electron transfer from ubiquinol to cytochrome c, linking this redox reaction to translocation of protons across the mitochondrial inner membrane, with protons being carried across the membrane as hydrogens on the quinol. In the process called Q cycle, 2 protons are consumed from the matrix, 4 protons are released into the intermembrane space and 2 electrons are passed to cytochrome c. This is Probable mitochondrial-processing peptidase subunit beta, mitochondrial (MPPbeta) from Arabidopsis thaliana (Mouse-ear cress).